We begin with the raw amino-acid sequence, 444 residues long: MAAKQNRISEALSSFIRAESFSGIFLFFCAVSAMIVANSPFSDIYKNFWEQPFGFSFAGGFYGFSIHDWINDVLMSIFFLMVGLEIKRELLFGDLSGFQKAAFPVIGAVGGMIVPGVIYYVLNMNTPSYHGFGIPMATDIAFALGVILLLGKRVPLALKVFLVTLAVADDLGAIVVIAVFYPSPEGLHFIYLGVAAGLLILLTGINHLGVRHLGVYIGIGILLWFCVHHSGIHATIAAVALAFCIPVKPKIESKEFIQVVQQMIEIFESKDKERKNILLDTQQMSAIDEAGRDFAKVQNPLLRLEHALQPLCAFIIMPLFAFANAGVDIRAEVNFHIDHIMLGVILGLVVGKPLGILSLTFLCEKCKIASRPAGVSWSHIFGAGMLAGIGFTMSMFVSNLAFDAPQASDVSKIAILLASSIAGIVGSLYLIINYKINSRAKVKS.

11 consecutive transmembrane segments (helical) span residues 21–41 (FSGI…NSPF), 64–84 (FSIH…MVGL), 102–122 (AFPV…YYVL), 131–151 (GFGI…LLLG), 160–180 (VFLV…IAVF), 185–205 (EGLH…LTGI), 212–232 (HLGV…HSGI), 307–327 (ALQP…NAGV), 342–362 (LGVI…LTFL), 377–397 (WSHI…SMFV), and 413–433 (IAIL…LIIN).

The protein belongs to the NhaA Na(+)/H(+) (TC 2.A.33) antiporter family.

It is found in the cell inner membrane. It catalyses the reaction Na(+)(in) + 2 H(+)(out) = Na(+)(out) + 2 H(+)(in). Functionally, na(+)/H(+) antiporter that extrudes sodium in exchange for external protons. This is Na(+)/H(+) antiporter NhaA 2 from Helicobacter hepaticus (strain ATCC 51449 / 3B1).